A 442-amino-acid chain; its full sequence is Probable protein phosphatase 2C 15 (442 aa).

The 269-residue stretch at 35–303 folds into the PPM-type phosphatase domain; the sequence is AAERPELQVG…DDTTCIVVDI (269 aa). Mn(2+)-binding residues include Asp80, Gly81, Asp255, and Asp294. Positions 420 to 434 are enriched in basic and acidic residues; the sequence is KKEAMEGKRRSRDSS. Positions 420–442 are disordered; it reads KKEAMEGKRRSRDSSSRNSGSSE.

It belongs to the PP2C family. Mg(2+) serves as cofactor. Mn(2+) is required as a cofactor.

The catalysed reaction is O-phospho-L-seryl-[protein] + H2O = L-seryl-[protein] + phosphate. The enzyme catalyses O-phospho-L-threonyl-[protein] + H2O = L-threonyl-[protein] + phosphate. The chain is Probable protein phosphatase 2C 15 from Oryza sativa subsp. japonica (Rice).